The chain runs to 704 residues: Zinc finger CCHC domain-containing protein 8 (704 aa).

The residue at position 2 (A2) is an N-acetylalanine. The span at 16-33 (FDHPEESIPEPVHTRFKD) shows a compositional bias: basic and acidic residues. A disordered region spans residues 16-43 (FDHPEESIPEPVHTRFKDDDEEDENGVG). Residues 43 to 78 (GDAELRERLRQCEETIEQLRAENQELKRKLNILTRP) are a coiled coil. The CCHC-type zinc-finger motif lies at 225–242 (PHCFNCGSEEHQMKDCPM). 2 RBM7 binding regions span residues 284 to 297 (FKPGVISEELQDAL) and 307 to 322 (FIYRMRQLGYPPGWLK). A Phosphothreonine modification is found at T340. Disordered regions lie at residues 407-516 (APGV…LTLE) and 529-599 (LEQA…SPDC). A Glycyl lysine isopeptide (Lys-Gly) (interchain with G-Cter in SUMO2) cross-link involves residue K411. The segment covering 454-463 (SQSSESFQFQ) has biased composition (low complexity). The span at 464 to 494 (PPLPPDTPPLPRGTPPPIFTPPLPKGTPPLT) shows a compositional bias: pro residues. Phosphothreonine occurs at positions 470, 477, 483, and 490. A coiled-coil region spans residues 514–538 (TLEELEEQQRRIWAALEQAESLNSD). The segment covering 547–557 (LTGNSVASSPC) has biased composition (polar residues). T575 carries the post-translational modification Phosphothreonine. S596 bears the Phosphoserine mark. T645 carries the post-translational modification Phosphothreonine. Phosphoserine occurs at positions 646, 655, and 692. The MTREX binding stretch occupies residues 656–704 (PIPDMSKFATGITPFEFENMAESTGMYLRIRSLLKNSPRNQQKNKKASE).

The protein belongs to the ZCCHC8 family. As to quaternary structure, component of a nuclear TRAMP-like complex, an ATP-dependent exosome regulatory complex consisting of a helicase (MTREX), an oligadenylate polymerase (TENT4B or TENT4A), and a substrate specific RNA-binding factor (ZCCHC7 or ZCCHC8). Several TRAMP-like complexes exist with specific compositions and are associated with nuclear, or nucleolar RNA exosomes. Identified in the spliceosome C complex. Component of the nuclear exosome targeting (NEXT) complex composed of MTREX, ZCCHC8, and RBM7 that directs a subset of non-coding short-lived RNAs for exosomal degradation. Interacts with proteins involved in RNA processing and degradation such as MTREX and RBM7; interaction with MTREX enhances MTREX RNA helicase activity and bridges between RBM7 and MTREX. Interacts with TERC, the telomerase RNA component. Phosphorylation at Thr-490 by GSK3 is triggered in cells entering mitosis.

The protein localises to the nucleus. It is found in the nucleoplasm. Functionally, scaffolding subunit of the trimeric nuclear exosome targeting (NEXT) complex that is involved in the surveillance and turnover of aberrant transcripts and non-coding RNAs. NEXT functions as an RNA exosome cofactor that directs a subset of non-coding short-lived RNAs for exosomal degradation. May be involved in pre-mRNA splicing. It is required for 3'-end maturation of telomerase RNA component (TERC), TERC 3'-end targeting to the nuclear RNA exosome, and for telomerase function. This Pongo abelii (Sumatran orangutan) protein is Zinc finger CCHC domain-containing protein 8 (ZCCHC8).